The following is a 237-amino-acid chain: Ribonuclease PH (237 aa).

Residues Arg86 and 124–126 (GTR) contribute to the phosphate site.

Belongs to the RNase PH family. Homohexameric ring arranged as a trimer of dimers.

The enzyme catalyses tRNA(n+1) + phosphate = tRNA(n) + a ribonucleoside 5'-diphosphate. Functionally, phosphorolytic 3'-5' exoribonuclease that plays an important role in tRNA 3'-end maturation. Removes nucleotide residues following the 3'-CCA terminus of tRNAs; can also add nucleotides to the ends of RNA molecules by using nucleoside diphosphates as substrates, but this may not be physiologically important. Probably plays a role in initiation of 16S rRNA degradation (leading to ribosome degradation) during starvation. This is Ribonuclease PH from Shewanella woodyi (strain ATCC 51908 / MS32).